The primary structure comprises 422 residues: MKLEIKCFIICKVLPLVWLNMAQIQQVGAPEEKEKTTALKDLLSRIDLDELMKKDEPPLEFPDTLEGFNYAFNELGQLRHIQTGDPFVFNYREDLHRWNQKRYEALGEIITKHVYELLEKDCELEKVYLPVDATDSEPRSFIFMSKDAMTNPDKMLVLIHGSGVVRAGQWARRLIINEDLNSGSQIPYIKRAMKEGYAVIVLNPNENYIEVEKSKVPADQPSPDSSDEPAEKRERRERNPKETKKRRDFYEKYRNPQKEKETLQVYIRDNGSPEEHALYVWDNFISKAAAENILFVAHSYGGLTFVELMIQREADVKNKVAAVALTDSVHNVWHQDASKTLREWMRENCCNWVSSSEPLDTSVESTLPDCPRVSAGTERHELTSWKSFHSIFKFFDDALQAKNTKTKPTPTRRSNRIKHEDL.

Residues 1-19 (MKLEIKCFIICKVLPLVWL) form the signal peptide. The interval 213-253 (KSKVPADQPSPDSSDEPAEKRERRERNPKETKKRRDFYEKY) is disordered. Residues 229-242 (PAEKRERRERNPKE) show a composition bias toward basic and acidic residues. Ser299 functions as the Nucleophile in the catalytic mechanism. Residues 403–422 (NTKTKPTPTRRSNRIKHEDL) form a disordered region.

The protein belongs to the ARB2A family.

The protein localises to the nucleus. Its subcellular location is the cytoplasm. May play role in the regulation of alternative splicing. May have hydrolase activity. In Xenopus tropicalis (Western clawed frog), this protein is Cotranscriptional regulator ARB2A homolog (arb2a).